The sequence spans 647 residues: MLTWKNNLTPVSEQFDDIYFSPENGLEETKHVFIKGNDLYNRWRNWNIQNAFCILELGFGTGLNFLTTWKEYLEYKDRFRLHFISIEKFPLNREEISKALSIFSELVEIKKEFLSSYQDLIPGMNYFQFLGGKIHFSLFLGDVSSALCEISGKVDAIFLDGFAPSKNPEMWDKSVLENLKYVSKKGTTLSTFTVARMVRDSLSFSGFKLEKRPGFGRKREMLIGSYSDSFLESNPKEKPWCKRAYPELQIKTVAIVGAGIAGTTLAYSLSRRGIQVFLIDPSGIAKETSGIPMAISHPHLTKIPGPISLFTLRAFRYALSFLSSFADQNFFEKTGLFHSVTQEMDSERLQKGIENHKLSEEIVFWKPIASKFQNGDFLENEPGVFFRNGFWTRPESIAKKCAEQPGVEFIKGTASRIEQDGTSWKLLIQESGHEIVANSIIFCNSHSIGKLIASLFEGEEPFPIRKVRGQLISLKETEKSSRISNILCAEHYLTPSILGEHILGSTFDEFDLNPLPQKKDTDRLLEFVQNKYPSLNFDSSCVLIEKVGLRAQTPDRLPILGPVFDPREFRKIYKEIDLPKNRNKKFPNLKTIQGLYVFGGLGSRGILSSFLGSEIMASLILGEPVPVESSVLEYLHPARFLYRKVRK.

Residues 1–227 (MLTWKNNLTP…KREMLIGSYS (227 aa)) are tRNA (mnm(5)s(2)U34)-methyltransferase. The FAD-dependent cmnm(5)s(2)U34 oxidoreductase stretch occupies residues 256–647 (VGAGIAGTTL…ARFLYRKVRK (392 aa)).

This sequence in the N-terminal section; belongs to the methyltransferase superfamily. tRNA (mnm(5)s(2)U34)-methyltransferase family. In the C-terminal section; belongs to the DAO family. The cofactor is FAD.

It localises to the cytoplasm. The enzyme catalyses 5-aminomethyl-2-thiouridine(34) in tRNA + S-adenosyl-L-methionine = 5-methylaminomethyl-2-thiouridine(34) in tRNA + S-adenosyl-L-homocysteine + H(+). Catalyzes the last two steps in the biosynthesis of 5-methylaminomethyl-2-thiouridine (mnm(5)s(2)U) at the wobble position (U34) in tRNA. Catalyzes the FAD-dependent demodification of cmnm(5)s(2)U34 to nm(5)s(2)U34, followed by the transfer of a methyl group from S-adenosyl-L-methionine to nm(5)s(2)U34, to form mnm(5)s(2)U34. In Leptospira interrogans serogroup Icterohaemorrhagiae serovar copenhageni (strain Fiocruz L1-130), this protein is tRNA 5-methylaminomethyl-2-thiouridine biosynthesis bifunctional protein MnmC.